A 387-amino-acid chain; its full sequence is Ferrochelatase (387 aa).

H196 and E277 together coordinate Fe cation.

This sequence belongs to the ferrochelatase family.

Its subcellular location is the cytoplasm. The enzyme catalyses heme b + 2 H(+) = protoporphyrin IX + Fe(2+). It participates in porphyrin-containing compound metabolism; protoheme biosynthesis; protoheme from protoporphyrin-IX: step 1/1. In terms of biological role, catalyzes the ferrous insertion into protoporphyrin IX. The sequence is that of Ferrochelatase from Cyanothece sp. (strain PCC 7425 / ATCC 29141).